Reading from the N-terminus, the 266-residue chain is Oxygen-evolving enhancer protein 2-3, chloroplastic (266 aa).

The transit peptide at 1-80 (MASTQCFLHH…VGSKVSPADA (80 aa)) directs the protein to the chloroplast.

It belongs to the PsbP family.

It localises to the plastid. It is found in the chloroplast thylakoid membrane. Functionally, may be involved in the regulation of photosystem II. This chain is Oxygen-evolving enhancer protein 2-3, chloroplastic (PSBP3), found in Nicotiana tabacum (Common tobacco).